A 376-amino-acid chain; its full sequence is MSQDVLTLAQDLISRESVTPLDEGCQQLMADRLSAKGFDIESMVFDDTTNMWARRGNSGPLFCFAGHTDVVPVGDLNRWHTPPFDPVVIDGYLHGRGAADMKGSLAAMLVATERFVEKHPDHNGSIAFLITSDEEGPFINGTTRVIDTLEARNEKITWALVGEPSSTHKLGDIVKNGRRGSLTGNLTVNGIQGHVAYPHLADNPIHNAAPALDELARMKWDNGNEFFPPTSFQIANINGGTGASNVIPGSLEVMFNFRYSTEVTAEELIKRVLNILDAHGLDYDISWTFNGLPFLTGEGPLLDATRDAIKQVTGTDTDPQTSGGTSDGRFIAPTGAHVIELGPVNATIHKVNECVKVADLEQLALCYEVILEKLLC.

Position 67 (H67) interacts with Zn(2+). The active site involves D69. Zn(2+) is bound at residue D100. The active-site Proton acceptor is E134. Zn(2+)-binding residues include E135, E163, and H349.

It belongs to the peptidase M20A family. DapE subfamily. Homodimer. Zn(2+) serves as cofactor. It depends on Co(2+) as a cofactor.

It carries out the reaction N-succinyl-(2S,6S)-2,6-diaminopimelate + H2O = (2S,6S)-2,6-diaminopimelate + succinate. The protein operates within amino-acid biosynthesis; L-lysine biosynthesis via DAP pathway; LL-2,6-diaminopimelate from (S)-tetrahydrodipicolinate (succinylase route): step 3/3. Functionally, catalyzes the hydrolysis of N-succinyl-L,L-diaminopimelic acid (SDAP), forming succinate and LL-2,6-diaminopimelate (DAP), an intermediate involved in the bacterial biosynthesis of lysine and meso-diaminopimelic acid, an essential component of bacterial cell walls. This Shewanella sediminis (strain HAW-EB3) protein is Succinyl-diaminopimelate desuccinylase.